A 513-amino-acid polypeptide reads, in one-letter code: Probable G-protein coupled receptor Mth-like 9 (513 aa).

The N-terminal stretch at 1 to 19 (MVSPLIILLIIWLSVGAKS) is a signal peptide. Residues 20–207 (VEIASINHPC…NCERFQTGYR (188 aa)) are Extracellular-facing. Disulfide bonds link Cys-29-Cys-82, Cys-84-Cys-89, Cys-93-Cys-181, and Cys-94-Cys-107. Residue Asn-36 is glycosylated (N-linked (GlcNAc...) asparagine). Residues Asn-106, Asn-125, and Asn-165 are each glycosylated (N-linked (GlcNAc...) asparagine). The helical transmembrane segment at 208-228 (VWIYAICSIIAIIINIFILSL) threads the bilayer. Over 229 to 242 (LGSVRDARKSHYGQ) the chain is Cytoplasmic. The helical transmembrane segment at 243–263 (LIIYYLLSMIVGYSLLVYLAL) threads the bilayer. The Extracellular portion of the chain corresponds to 264–276 (KNPMKLSHVACRN). Residues 277–297 (IGFLAYFCIMLSFVFLAICSL) traverse the membrane as a helical segment. Topologically, residues 298–314 (DFLLKFKQKAVRSSVRR) are cytoplasmic. Residues 315–335 (LSLALAVLAVIGLRFLVSLAQ) form a helical membrane-spanning segment. Topologically, residues 336–360 (DSKLPKHFKPGMGEDYCWFDVRTWG) are extracellular. The helical transmembrane segment at 361 to 381 (ILIYYYGPIALLLIFSIVCCL) threads the bilayer. Residues 382 to 403 (KAYFSIYELPPDTQYILGTQLK) are Cytoplasmic-facing. Residues 404–424 (IVKTHFYAFSAYIVGVFAVWI) form a helical membrane-spanning segment. The Extracellular portion of the chain corresponds to 425-438 (REIVVYIMARVREH). Residues 439-459 (FFIIDFWSGICILGLAIAGFI) form a helical membrane-spanning segment. Residues 460 to 513 (LLLGKNLHVKSWWAINVESSQTDLSIINARVYKFDEKGDLKSSDSPYKPTVTSL) are Cytoplasmic-facing.

The protein belongs to the G-protein coupled receptor 2 family. Mth subfamily.

Its subcellular location is the cell membrane. In Drosophila melanogaster (Fruit fly), this protein is Probable G-protein coupled receptor Mth-like 9 (mthl9).